A 27-amino-acid chain; its full sequence is Morintide mO5 (27 aa).

A Chitin-binding type-1 domain is found at 1–27 (NGLCCSQYGFCGTTSQYCSRANGCQSN). Cysteines 4 and 18 form a disulfide.

In terms of tissue distribution, seeds (at protein level).

Its function is as follows. Chitin-binding protein which functions in defense against chitin-containing fungal pathogens. The sequence is that of Morintide mO5 from Moringa oleifera (Horseradish tree).